Reading from the N-terminus, the 248-residue chain is Probable phosphatase VF_A0065 (248 aa).

Positions 8, 10, 16, 41, 74, 102, 132, 194, and 196 each coordinate Zn(2+).

The protein belongs to the PHP family. Zn(2+) is required as a cofactor.

The protein is Probable phosphatase VF_A0065 of Aliivibrio fischeri (strain ATCC 700601 / ES114) (Vibrio fischeri).